A 278-amino-acid polypeptide reads, in one-letter code: Inosose isomerase (278 aa).

A divalent metal cation is bound by residues E142, D174, H200, and E246.

Belongs to the IolI family. Mn(2+) serves as cofactor. Requires Fe(2+) as cofactor. The cofactor is Co(2+).

The enzyme catalyses scyllo-inosose = scyllo-inosine. It functions in the pathway polyol metabolism; myo-inositol degradation into acetyl-CoA. Its function is as follows. Involved in the reversible interconverion of 2-keto-myo-inositol (2KMI, inosose or 2,4,6/3,5-pentahydroxycyclohexanone) to 1-keto-D-chiro-inositol (1KDCI or 2,3,5/4,6-pentahydroxycyclohexanone). The polypeptide is Inosose isomerase (iolI) (Bacillus subtilis (strain 168)).